The chain runs to 374 residues: Glutamate 5-kinase (374 aa).

Lys9 is a binding site for ATP. Ser49, Asp136, and Asn148 together coordinate substrate. ATP contacts are provided by residues 168–169 (TD) and 210–216 (TGGMRSK). One can recognise a PUA domain in the interval 276-354 (SGTITVDSGA…EEARQYSYLH (79 aa)).

It belongs to the glutamate 5-kinase family.

It localises to the cytoplasm. The enzyme catalyses L-glutamate + ATP = L-glutamyl 5-phosphate + ADP. It functions in the pathway amino-acid biosynthesis; L-proline biosynthesis; L-glutamate 5-semialdehyde from L-glutamate: step 1/2. In terms of biological role, catalyzes the transfer of a phosphate group to glutamate to form L-glutamate 5-phosphate. The chain is Glutamate 5-kinase from Geobacillus thermodenitrificans (strain NG80-2).